The following is a 106-amino-acid chain: Cytochrome c oxidase assembly factor 3 homolog, mitochondrial (106 aa).

Positions 1–28 (MASSGSGDPLDSKRGEAPFAQRIDPTRE) are disordered. Alanine 2 is subject to N-acetylalanine. Topologically, residues 2-57 (ASSGSGDPLDSKRGEAPFAQRIDPTREKLTPEQLHFMRQAQLAQWQKVLPRRRTRN) are mitochondrial matrix. A helical membrane pass occupies residues 58 to 80 (IVTGLGIGALVLAIHGYTFYSIS). Positions 78-104 (SISQERFLDELEDEAKAARARALARAS) form a coiled coil. At 81–106 (QERFLDELEDEAKAARARALARASGS) the chain is on the mitochondrial intermembrane side.

The protein belongs to the COA3 family. In terms of assembly, along with COX14, core component of the MITRAC (mitochondrial translation regulation assembly intermediate of cytochrome c oxidase complex) complex. Interacts with MT-CO1/COX1, SMIM20, SURF1 and TIMM21.

It is found in the mitochondrion inner membrane. Core component of the MITRAC (mitochondrial translation regulation assembly intermediate of cytochrome c oxidase complex) complex, that regulates cytochrome c oxidase assembly. MITRAC complexes regulate both translation of mitochondrial encoded components and assembly of nuclear-encoded components imported in mitochondrion. Required for efficient translation of MT-CO1 and mitochondrial respiratory chain complex IV assembly. This is Cytochrome c oxidase assembly factor 3 homolog, mitochondrial (COA3) from Pongo abelii (Sumatran orangutan).